A 566-amino-acid chain; its full sequence is MVVFGNVSAANLPYQNGFLEALSSGGCELMGHSFRVPTSQALKTRTRRRSTAGPLQVVCVDIPRPELENTVNFLEAASLSASFRSAPRPAKPLKVVIAGAGLAGLSTAKYLADAGHKPLLLEARDVLGGKIAAWKDEDGDWYETGLHIFFGAYPNVQNLFGELGINDRLQWKEHSMIFAMPSKPGEFSRFDFPDVLPAPLNGIWAILRNNEMLTWPEKIKFAIGLLPAMVGGQAYVEAQDGLSVKEWMEKQGVPERVTDEVFIAMSKALNFINPDELSMQCILIALNRFLQEKHGSKMAFLDGNPPERLCMPVVDHIRSLGGEVQLNSRIKKIELNDDGTVKSFLLTNGSTVEGDAYVFAAPVDILKLLLPDPWKEIPYFKKLDKLVGVPVINVHIWFDRKLKNTYDHLLFSRSNLLSVYADMSLTCKEYYDPNRSMLELVFAPAEEWISRTDSDIIDATMKELEKLFPDEISADQSKAKILKYHVVKTPRSVYKTIPNCEPCRPLQRSPIEGFYLAGDYTKQKYLASMEGAVLSGKFCSQSIVQDYELLAASGPRKLSEATVSSS.

The N-terminal 86 residues, 1 to 86, are a transit peptide targeting the chloroplast and chromoplast; it reads MVVFGNVSAA…ASLSASFRSA (86 aa). Residues alanine 103, 122–123, lysine 130, 147–148, and tyrosine 153 each bind FAD; these read EA and HI. Substrate is bound at residue arginine 288. Residues isoleucine 330 and aspartate 519 each contribute to the FAD site. Position 527 (alanine 527) interacts with substrate. Methionine 529 lines the FAD pocket.

It belongs to the carotenoid/retinoid oxidoreductase family. As to quaternary structure, homotetramer. FAD serves as cofactor.

It is found in the plastid. The protein localises to the chloroplast. Its subcellular location is the chromoplast. It localises to the membrane. The catalysed reaction is 2 a plastoquinone + 15-cis-phytoene = 9,9',15-tri-cis-zeta-carotene + 2 a plastoquinol. Its pathway is carotenoid biosynthesis; lycopene biosynthesis. In terms of biological role, converts phytoene into zeta-carotene via the intermediary of phytofluene by the symmetrical introduction of two double bonds at the C-11 and C-11' positions of phytoene with a concomitant isomerization of two neighboring double bonds at the C9 and C9' positions from trans to cis. This is 15-cis-phytoene desaturase, chloroplastic/chromoplastic (PDS) from Arabidopsis thaliana (Mouse-ear cress).